The primary structure comprises 490 residues: POC1 centriolar protein homolog B (490 aa).

WD repeat units follow at residues 16–55 (GHKDVISCADFNPNNKQLATGSCDKSLMIWNLAPKARAFR), 58–97 (GHTDVITGVNFAPSGSLVASSSRDQTVRLWTPSIKGESTV), 100–139 (AHTASVRSVHFSRDGQRLVTASDDKSVKVWGVERKKFLYS), 142–181 (RHTNWVRCARFSPDGRLIASCGDDRTVRLWDTSSHQCINI), 184–223 (DYGGSATFVDFNSSGTCIASSGADNTIKIWDIRTNKLIQH), 226–265 (VHNAGVNCFSFHPSGNYLISGSSDSTIKILDLLEGRLIYT), and 268–307 (GHKGPVLTVTFSRDGDLFASGGADSQVLMWKTNFDSLNYR). Residues 375 to 388 (DGASSSRAQFTSGM) are compositionally biased toward polar residues. Positions 375–427 (DGASSSRAQFTSGMDSGPFRTHTQAREEEDENQEERFAGGMTASPAERSGIPS) are disordered. Positions 431-463 (STLENIVQQLDILTQTVAVLEERLTLTEDKLRT) form a coiled coil.

It belongs to the WD repeat POC1 family.

The protein resides in the cytoplasm. It localises to the cytoskeleton. It is found in the microtubule organizing center. Its subcellular location is the centrosome. The protein localises to the centriole. Plays an important role in centriole assembly and/or stability and ciliogenesis. Involved in early steps of centriole duplication, as well as in the later steps of centriole length control. This is POC1 centriolar protein homolog B from Danio rerio (Zebrafish).